Here is a 3616-residue protein sequence, read N- to C-terminus: Replicase polyprotein 1ab (3616 aa).

The segment at 8 to 28 (CLCTPNARVFWEHGQVYCTRC) adopts a C4-type; atypical zinc-finger fold. The Peptidase C31 domain maps to 69–181 (ECRPGGLCWL…KGLCPFSDAR (113 aa)). Residues Cys76 and His147 each act as for Nsp1-alpha papain-like cysteine proteinase activity in the active site. The Peptidase C32 domain maps to 262-381 (NDTKFSKCWE…FRFQTRKYYG (120 aa)). Catalysis depends on for Nsp1-beta papain-like cysteine proteinase activity residues Cys269 and His340. The 106-residue stretch at 381-486 (GYSPPGDGAC…RGVCGGECKF (106 aa)) folds into the Peptidase C33 domain. Catalysis depends on for Nsp2 cysteine proteinase activity residues Cys390 and His456. Disordered regions lie at residues 672 to 706 (SRAL…REVP) and 883 to 912 (PLKS…GAPR). The span at 676-690 (KSAKPKRKRNKKKKT) shows a compositional bias: basic residues. Residues 903-912 (DQLSQDGAPR) show a composition bias toward polar residues. 9 consecutive transmembrane segments (helical) span residues 942–962 (WLNH…SVVL), 977–997 (LFCL…FIPL), 1010–1030 (LSVF…VLPE), 1060–1080 (HIGV…VGGP), 1085–1105 (FYFL…AVAL), 1289–1309 (VADF…SAWL), 1364–1384 (ALMI…SLLV), 1386–1406 (VICV…VIAF), and 1425–1445 (VQFF…VILI). An HD1 region spans residues 981 to 1105 (CCVLLCFHFP…LGLVFLAVAL (125 aa)). Residues 1289-1448 (VADFVCLGLY…AVAVILISSW (160 aa)) are HD2. A Peptidase S32 domain is found at 1513–1714 (GSLRTRGCAK…AVVESLPTPE (202 aa)). Catalysis depends on charge relay system; for 3C-like serine proteinase activity residues His1551, Asp1576, and Ser1628. A run of 4 helical transmembrane segments spans residues 1715-1735 (GALS…LIHV), 1737-1757 (FVPV…VVLA), 1761-1781 (FSFA…VLLL), and 1832-1852 (SKEI…LSLF). The segment at 1737 to 1852 (FVPVIAVAFF…HVLALLLSLF (116 aa)) is HD3. Residues 2194 to 2352 (SLNGLQQSSA…LPYKLHPVRG (159 aa)) form the NiRAN domain. Residues 2590–2724 (GRCLEADLAS…YNESDELPNY (135 aa)) form the RdRp catalytic domain. The AV ZBD domain occupies 2844 to 2907 (KKKCRTCAHC…SSAMNLNTEL (64 aa)). 12 residues coordinate Zn(2+): Cys2850, Cys2853, Cys2863, Cys2868, His2871, His2873, His2875, His2877, Cys2884, His2886, Cys2893, and Cys2896. One can recognise a (+)RNA virus helicase ATP-binding domain in the interval 2964–3116 (QVMKVAQTCA…AFSLMPGRQL (153 aa)). 2992–2999 (GAPGTGKT) contacts ATP. The (+)RNA virus helicase C-terminal domain occupies 3117–3248 (IEVFRFGPAV…CGDQPKMIVG (132 aa)). Positions 3272 to 3368 (EGTASPLPQV…LTKYLKGESV (97 aa)) constitute an AV-Nsp11N/CoV-Nsp15M domain. One can recognise a NendoU domain in the interval 3370 to 3492 (LPDSIMSTGR…MVWKDATAYF (123 aa)).

The protein belongs to the arteriviridae polyprotein family. In terms of processing, specific enzymatic cleavages in vivo by its own proteases yield mature proteins. There are two alternative pathways for processing. Either nsp4-5 is cleaved, which represents the major pathway or the nsp5-6 and nsp6-7 are processed, which represents the minor pathway. The major pathway occurs when nsp2 acts as a cofactor for nsp4.

It localises to the host membrane. It is found in the host cytoplasm. The protein resides in the host perinuclear region. It catalyses the reaction RNA(n) + a ribonucleoside 5'-triphosphate = RNA(n+1) + diphosphate. The enzyme catalyses ATP + H2O = ADP + phosphate + H(+). It carries out the reaction uridylyl-uridylyl-ribonucleotide-RNA = a 3'-end uridylyl-2',3'-cyclophospho-uridine-RNA + a 5'-end dephospho-ribonucleoside-RNA. Functionally, the replicase polyprotein 1ab is a multifunctional protein: it contains the activities necessary for the transcription of negative stranded RNA, leader RNA, subgenomic mRNAs and progeny virion RNA as well as proteinases responsible for the cleavage of the polyprotein into functional products. The Nsp1 chain is essential for viral subgenomic mRNA synthesis. In terms of biological role, the 3C-like serine proteinase chain is responsible for the majority of cleavages as it cleaves the C-terminus of the polyprotein. Its function is as follows. The helicase chain, which contains a zinc finger structure, displays RNA and DNA duplex-unwinding activities with 5' to 3' polarity. Functionally, plays a role in viral transcription/replication and prevents the simultaneous activation of host cell dsRNA sensors, such as MDA5/IFIH1, OAS, and PKR. Acts by degrading the 5'-polyuridines generated during replication of the poly(A) region of viral genomic and subgenomic RNAs. Catalyzes a two-step reaction in which a 2'3'-cyclic phosphate (2'3'-cP) is first generated by 2'-O transesterification, which is then hydrolyzed to a 3'-phosphate (3'-P). If not degraded, poly(U) RNA would hybridize with poly(A) RNA tails and activate host dsRNA sensors. This chain is Replicase polyprotein 1ab (rep), found in Mus musculus domesticus (western European house mouse).